Reading from the N-terminus, the 276-residue chain is Putative pyridoxine kinase (276 aa).

N139 contributes to the ATP binding site. E142 lines the Mg(2+) pocket. ATP-binding positions include 176–180 (KGGKA), D188, G213, and K238.

This sequence belongs to the ThiD family.

The enzyme catalyses pyridoxal + ATP = pyridoxal 5'-phosphate + ADP + H(+). Functionally, phosphorylates B6 vitamers; functions in a salvage pathway. Uses pyridoxal, pyridoxine, and pyridoxamine as substrates. The polypeptide is Putative pyridoxine kinase (pdxK) (Staphylococcus epidermidis (strain ATCC 12228 / FDA PCI 1200)).